Consider the following 494-residue polypeptide: Aspartyl/glutamyl-tRNA(Asn/Gln) amidotransferase subunit B (494 aa).

Positions 475–494 are disordered; that stretch reads TSGRADPKATNQMLAKKLKG.

Belongs to the GatB/GatE family. GatB subfamily. As to quaternary structure, heterotrimer of A, B and C subunits.

It carries out the reaction L-glutamyl-tRNA(Gln) + L-glutamine + ATP + H2O = L-glutaminyl-tRNA(Gln) + L-glutamate + ADP + phosphate + H(+). The catalysed reaction is L-aspartyl-tRNA(Asn) + L-glutamine + ATP + H2O = L-asparaginyl-tRNA(Asn) + L-glutamate + ADP + phosphate + 2 H(+). Allows the formation of correctly charged Asn-tRNA(Asn) or Gln-tRNA(Gln) through the transamidation of misacylated Asp-tRNA(Asn) or Glu-tRNA(Gln) in organisms which lack either or both of asparaginyl-tRNA or glutaminyl-tRNA synthetases. The reaction takes place in the presence of glutamine and ATP through an activated phospho-Asp-tRNA(Asn) or phospho-Glu-tRNA(Gln). The protein is Aspartyl/glutamyl-tRNA(Asn/Gln) amidotransferase subunit B of Acaryochloris marina (strain MBIC 11017).